The sequence spans 361 residues: Adenosine kinase (361 aa).

A Nuclear localization signal motif is present at residues 7 to 15 (PKPKKLKVE). Asp-34 contacts adenosine. Mg(2+) is bound at residue Ser-48. Tyr-76 is subject to Phosphotyrosine. Position 147 (Asn-147) interacts with Mg(2+). Gln-305 contributes to the adenosine binding site. Asp-316 is an active-site residue. Asp-316 acts as the Proton acceptor in catalysis.

The protein belongs to the carbohydrate kinase PfkB family. Monomer. Mg(2+) is required as a cofactor.

It localises to the nucleus. It catalyses the reaction adenosine + ATP = AMP + ADP + H(+). It participates in purine metabolism; AMP biosynthesis via salvage pathway; AMP from adenosine: step 1/1. Catalyzes the phosphorylation of the purine nucleoside adenosine at the 5' position in an ATP-dependent manner. Serves as a potential regulator of concentrations of extracellular adenosine and intracellular adenine nucleotides. The sequence is that of Adenosine kinase (Adk) from Rattus norvegicus (Rat).